We begin with the raw amino-acid sequence, 75 residues long: Gas vesicle protein S (75 aa).

It belongs to the gas vesicle GvpA family.

The protein resides in the gas vesicle. Functionally, probably a minor component of the gas vesicle. Gas vesicles are hollow, gas filled proteinaceous nanostructures found in some microorganisms. It is not clear what function gas vesicles perform in soil bacteria. In Streptomyces sp. (strain CB03234), this protein is Gas vesicle protein S.